The primary structure comprises 61 residues: MELITELFDGASAPVVTLNPKHKIPQIFAIQAGEESVLPGFRFCTYTSGGDTNKTLNQAIK.

This is an uncharacterized protein from Enterobacteria phage T4 (Bacteriophage T4).